A 513-amino-acid polypeptide reads, in one-letter code: Serine/threonine protein phosphatase 2A 55 kDa regulatory subunit B alpha isoform (513 aa).

An N-acetylmethionine modification is found at Met1. WD repeat units follow at residues 36–75 (QEVD…NSSG), 112–153 (EIEE…IKKI), 232–270 (AHDY…QSFN), 281–321 (DLSE…LCDS), 340–378 (EIIA…GPVA), and 483–513 (DYTT…MYYA).

It belongs to the phosphatase 2A regulatory subunit B family. As to quaternary structure, PP2A consists of a common heteromeric enzyme, composed of a catalytic subunit (subunits C), a constant regulatory subunit (subunit A), and a variety of regulatory subunits such as subunits B (the R2/B/PR55/B55, R3/B''/PR72/PR130/PR59 and R5/B'/B56 families). Interacts with SIC/RON3. Expressed ubiquitously.

The B regulatory subunit may modulate substrate selectivity and catalytic activity, and may also direct the localization of the catalytic enzyme to a particular subcellular compartment. This Arabidopsis thaliana (Mouse-ear cress) protein is Serine/threonine protein phosphatase 2A 55 kDa regulatory subunit B alpha isoform (PP2AB1).